The following is a 50-amino-acid chain: Large ribosomal subunit protein bL33B (50 aa).

The protein belongs to the bacterial ribosomal protein bL33 family.

This chain is Large ribosomal subunit protein bL33B, found in Mesomycoplasma hyopneumoniae (strain 7448) (Mycoplasma hyopneumoniae).